The following is a 301-amino-acid chain: 4-hydroxy-tetrahydrodipicolinate synthase (301 aa).

Residue Thr57 coordinates pyruvate. Catalysis depends on Tyr145, which acts as the Proton donor/acceptor. Residue Lys173 is the Schiff-base intermediate with substrate of the active site. A pyruvate-binding site is contributed by Ile213.

The protein belongs to the DapA family. In terms of assembly, homotetramer; dimer of dimers.

It is found in the cytoplasm. It catalyses the reaction L-aspartate 4-semialdehyde + pyruvate = (2S,4S)-4-hydroxy-2,3,4,5-tetrahydrodipicolinate + H2O + H(+). The protein operates within amino-acid biosynthesis; L-lysine biosynthesis via DAP pathway; (S)-tetrahydrodipicolinate from L-aspartate: step 3/4. Its function is as follows. Catalyzes the condensation of (S)-aspartate-beta-semialdehyde [(S)-ASA] and pyruvate to 4-hydroxy-tetrahydrodipicolinate (HTPA). This Corynebacterium diphtheriae (strain ATCC 700971 / NCTC 13129 / Biotype gravis) protein is 4-hydroxy-tetrahydrodipicolinate synthase.